Reading from the N-terminus, the 1002-residue chain is BTB/POZ domain-containing protein At1g04390 (1002 aa).

BTB domains lie at 680–758 and 808–889; these read SDMR…EVES and SDVI…PKPP.

It functions in the pathway protein modification; protein ubiquitination. Functionally, may act as a substrate-specific adapter of an E3 ubiquitin-protein ligase complex (CUL3-RBX1-BTB) which mediates the ubiquitination and subsequent proteasomal degradation of target proteins. In Arabidopsis thaliana (Mouse-ear cress), this protein is BTB/POZ domain-containing protein At1g04390.